Reading from the N-terminus, the 152-residue chain is Large ribosomal subunit protein uL22 (152 aa).

Belongs to the universal ribosomal protein uL22 family. Part of the 50S ribosomal subunit.

Its function is as follows. This protein binds specifically to 23S rRNA. It makes multiple contacts with different domains of the 23S rRNA in the assembled 50S subunit and ribosome. In terms of biological role, the globular domain of the protein is located near the polypeptide exit tunnel on the outside of the subunit, while an extended beta-hairpin is found that lines the wall of the exit tunnel in the center of the 70S ribosome. This chain is Large ribosomal subunit protein uL22, found in Nitrosopumilus maritimus (strain SCM1).